Consider the following 183-residue polypeptide: ATP synthase subunit b, chloroplastic (183 aa).

The helical transmembrane segment at 33–51 (IINLSVVIGVVVSFGGDAL) threads the bilayer.

This sequence belongs to the ATPase B chain family. In terms of assembly, F-type ATPases have 2 components, F(1) - the catalytic core - and F(0) - the membrane proton channel. F(1) has five subunits: alpha(3), beta(3), gamma(1), delta(1), epsilon(1). F(0) has four main subunits: a(1), b(1), b'(1) and c(10-14). The alpha and beta chains form an alternating ring which encloses part of the gamma chain. F(1) is attached to F(0) by a central stalk formed by the gamma and epsilon chains, while a peripheral stalk is formed by the delta, b and b' chains.

Its subcellular location is the plastid. The protein resides in the chloroplast thylakoid membrane. Its function is as follows. F(1)F(0) ATP synthase produces ATP from ADP in the presence of a proton or sodium gradient. F-type ATPases consist of two structural domains, F(1) containing the extramembraneous catalytic core and F(0) containing the membrane proton channel, linked together by a central stalk and a peripheral stalk. During catalysis, ATP synthesis in the catalytic domain of F(1) is coupled via a rotary mechanism of the central stalk subunits to proton translocation. In terms of biological role, component of the F(0) channel, it forms part of the peripheral stalk, linking F(1) to F(0). The chain is ATP synthase subunit b, chloroplastic from Oltmannsiellopsis viridis (Marine flagellate).